A 539-amino-acid chain; its full sequence is uncharacterized protein (539 aa).

6 to 20 (LIIGGGGAAARAAIE) provides a ligand contact to FAD. Catalysis depends on residues H227 and R243.

Belongs to the FAD-dependent oxidoreductase 2 family. FRD/SDH subfamily. The cofactor is FAD.

This is an uncharacterized protein from Methanocaldococcus jannaschii (strain ATCC 43067 / DSM 2661 / JAL-1 / JCM 10045 / NBRC 100440) (Methanococcus jannaschii).